The primary structure comprises 316 residues: Olfactory receptor 2T11 (316 aa).

Residues 1 to 22 are Extracellular-facing; it reads MTNTSSSDFTLLGLLVNSEAAG. Asn-3 carries an N-linked (GlcNAc...) asparagine glycan. A helical membrane pass occupies residues 23-46; the sequence is IVFTVILAVFLGAVTANLVMIFLI. Residues 47-54 are Cytoplasmic-facing; it reads QVDSRLHT. A helical membrane pass occupies residues 55-76; that stretch reads PMYFLLSQLSIMDTLFICTTVP. The Extracellular portion of the chain corresponds to 77–97; it reads KLLADMVSKEKIISFVACGIQ. An intrachain disulfide couples Cys-94 to Cys-186. Residues 98–117 traverse the membrane as a helical segment; that stretch reads IFLYLTMIGSEFFLLGLMAY. Over 118 to 136 the chain is Cytoplasmic; that stretch reads DCYVAVCNPLRYPVLMNRK. Residues 137-155 traverse the membrane as a helical segment; it reads KCLLLAAGAWFGGSLDGFL. The Extracellular portion of the chain corresponds to 156–192; sequence LTPITMNVPYCGSRSINHFFCEIPAVLKLACADTSLY. Residues 193 to 216 traverse the membrane as a helical segment; it reads ETLMYICCVLMLLIPISIISTSYS. The Cytoplasmic portion of the chain corresponds to 217-233; it reads LILLTIHRMPSAEGRKK. The helical transmembrane segment at 234 to 256 threads the bilayer; the sequence is AFTTCSSHLTVVSIFYGAAFYTY. Topologically, residues 257 to 269 are extracellular; the sequence is VLPQSFHTPEQDK. A helical membrane pass occupies residues 270–289; the sequence is VVSAFYTIVTPMLNPLIYSL. The Cytoplasmic portion of the chain corresponds to 290-316; the sequence is RNKDVIGAFKKVFACCSSAQKVATSDA.

This sequence belongs to the G-protein coupled receptor 1 family.

It is found in the cell membrane. Its function is as follows. Odorant receptor. The polypeptide is Olfactory receptor 2T11 (OR2T11) (Homo sapiens (Human)).